The following is a 3718-amino-acid chain: Laminin subunit alpha-5 (3718 aa).

The N-terminal stretch at 1–40 (MAKRGGQLCAGSAPGALGPRSPAPRPLLLLLAGLALVGEA) is a signal peptide. Residues 46–304 (DGFSLHPPYF…SIKDISIGGR (259 aa)) form the Laminin N-terminal domain. Asparagine 100, asparagine 148, and asparagine 248 each carry an N-linked (GlcNAc...) asparagine glycan. 12 cysteine pairs are disulfide-bonded: cysteine 305–cysteine 314, cysteine 307–cysteine 327, cysteine 329–cysteine 338, cysteine 341–cysteine 361, cysteine 364–cysteine 373, cysteine 366–cysteine 398, cysteine 401–cysteine 410, cysteine 413–cysteine 431, cysteine 434–cysteine 445, cysteine 436–cysteine 452, cysteine 454–cysteine 463, and cysteine 466–cysteine 476. Laminin EGF-like domains lie at 305–363 (CVCH…ECQS), 364–433 (CNCH…VCRP), and 434–479 (CDCE…CYPL). Residue asparagine 383 is glycosylated (N-linked (GlcNAc...) asparagine). N-linked (GlcNAc...) asparagine glycosylation is present at asparagine 457. N-linked (GlcNAc...) asparagine glycosylation occurs at asparagine 485. Cystine bridges form between cysteine 500–cysteine 512, cysteine 502–cysteine 521, cysteine 523–cysteine 532, cysteine 535–cysteine 544, cysteine 547–cysteine 559, cysteine 549–cysteine 566, cysteine 568–cysteine 577, cysteine 580–cysteine 590, cysteine 593–cysteine 605, cysteine 595–cysteine 611, cysteine 613–cysteine 622, cysteine 625–cysteine 635, cysteine 638–cysteine 650, cysteine 640–cysteine 656, cysteine 658–cysteine 667, cysteine 670–cysteine 680, cysteine 683–cysteine 695, cysteine 685–cysteine 702, cysteine 704–cysteine 713, cysteine 716–cysteine 731, cysteine 752–cysteine 761, cysteine 764–cysteine 779, cysteine 782–cysteine 796, cysteine 784–cysteine 802, cysteine 804–cysteine 813, cysteine 816–cysteine 831, cysteine 834–cysteine 846, cysteine 836–cysteine 853, and cysteine 855–cysteine 864. Laminin EGF-like domains follow at residues 500–546 (CDCN…SCHP), 547–592 (CQCS…LCQL), 593–637 (CGCS…DCHA), 638–682 (CACD…SCIP), 683–728 (CHCS…YCEA), 729–781 (GSCH…GCTR), and 782–833 (CSCD…GCRS). Positions 834 to 855 (CRCDVGGALGQGCEPKTGACRC) constitute a Laminin EGF-like 11; truncated domain. Positions 856 to 1442 (RPNTQGPTCS…SLFYNNGALP (587 aa)) are domain IV 1 (domain IV B). 3 N-linked (GlcNAc...) asparagine glycosylation sites follow: asparagine 905, asparagine 926, and asparagine 964. The segment at 1253-1284 (LTQSQELSPGAPPEGPQPRPPTAVDPNAEPTL) is disordered. The segment covering 1262–1275 (GAPPEGPQPRPPTA) has biased composition (pro residues). Asparagine 1335 is a glycosylation site (N-linked (GlcNAc...) asparagine). 16 cysteine pairs are disulfide-bonded: cysteine 1443/cysteine 1455, cysteine 1445/cysteine 1462, cysteine 1464/cysteine 1473, cysteine 1476/cysteine 1486, cysteine 1489/cysteine 1496, cysteine 1491/cysteine 1503, cysteine 1505/cysteine 1514, cysteine 1517/cysteine 1530, cysteine 1533/cysteine 1548, cysteine 1535/cysteine 1555, cysteine 1557/cysteine 1566, cysteine 1569/cysteine 1579, cysteine 1582/cysteine 1594, cysteine 1584/cysteine 1601, cysteine 1603/cysteine 1612, and cysteine 1615/cysteine 1630. Laminin EGF-like domains follow at residues 1443-1488 (CGCH…NCRP), 1489-1532 (CDCG…GCEE), 1533-1581 (CNCS…SCRP), and 1582-1632 (CDCH…GCTR). N-linked (GlcNAc...) asparagine glycosylation is present at asparagine 1534. The Laminin EGF-like 16; first part domain maps to 1633 to 1642 (CFCFGATERC). The region spanning 1646 to 1831 (NLARHEFVDM…RGPPASNVEL (186 aa)) is the Laminin IV type A domain. 2 consecutive short sequence motifs (cell attachment site) follow at residues 1723–1725 (RGD) and 1839–1841 (RGD). The region spanning 1832–1864 (CMCPANYRGDSCQECAPGYYRDTKGLFLGRCVP) is the Laminin EGF-like 16; second part domain. Intrachain disulfides connect cysteine 1865–cysteine 1874, cysteine 1867–cysteine 1881, cysteine 1884–cysteine 1893, cysteine 1896–cysteine 1912, cysteine 1915–cysteine 1930, cysteine 1917–cysteine 1939, cysteine 1941–cysteine 1950, cysteine 1953–cysteine 1968, cysteine 1971–cysteine 1986, cysteine 1973–cysteine 1993, cysteine 1996–cysteine 2005, cysteine 2008–cysteine 2022, cysteine 2025–cysteine 2035, cysteine 2027–cysteine 2042, cysteine 2044–cysteine 2053, cysteine 2056–cysteine 2069, cysteine 2072–cysteine 2083, cysteine 2074–cysteine 2090, cysteine 2092–cysteine 2101, cysteine 2104–cysteine 2116, cysteine 2119–cysteine 2126, cysteine 2121–cysteine 2133, cysteine 2135–cysteine 2144, and cysteine 2147–cysteine 2166. Laminin EGF-like domains lie at 1865–1914 (CQCH…PCVS), 1915–1970 (CPCP…SCQP), 1971–2024 (CDCS…NCTR), 2025–2071 (CDCS…GCRP), 2072–2118 (CACG…GCRR), and 2119–2168 (CQCP…HCEV). Residue asparagine 2021 is glycosylated (N-linked (GlcNAc...) asparagine). Positions 2169–2735 (CDHCVVLLLD…AQARSAASKV (567 aa)) are domain II and I. N-linked (GlcNAc...) asparagine glycans are attached at residues asparagine 2198, asparagine 2211, asparagine 2365, asparagine 2395, asparagine 2425, asparagine 2503, and asparagine 2570. 2 coiled-coil regions span residues 2205–2257 (ARLH…SQAT) and 2330–2464 (TRDL…ASLD). Coiled-coil stretches lie at residues 2604–2621 (ARKN…AMLA) and 2639–2705 (AEAL…LENR). The N-linked (GlcNAc...) asparagine glycan is linked to asparagine 2709. 5 consecutive Laminin G-like domains span residues 2736–2933 (KVSM…DKPC), 2947–3119 (GSYL…SFGC), 3128–3296 (TMTF…SVGC), 3337–3511 (AYQF…VTPC), and 3518–3689 (DGLF…MRGC). Intrachain disulfides connect cysteine 2903/cysteine 2933 and cysteine 3094/cysteine 3119. N-linked (GlcNAc...) asparagine glycosylation is found at asparagine 3111, asparagine 3213, asparagine 3261, and asparagine 3291. Disulfide bonds link cysteine 3265-cysteine 3296 and cysteine 3488-cysteine 3511. Asparagine 3623 and asparagine 3673 each carry an N-linked (GlcNAc...) asparagine glycan. An intrachain disulfide couples cysteine 3661 to cysteine 3689.

Laminin is a complex glycoprotein, consisting of three different polypeptide chains (alpha, beta, gamma), which are bound to each other by disulfide bonds into a cross-shaped molecule comprising one long and three short arms with globules at each end. Alpha-5 is a subunit of laminin-10 (laminin-511), laminin-11 (laminin-521) and laminin-15 (laminin-523). In terms of tissue distribution, in adult, high levels in heart, lung, and kidney; lower in brain, muscle and testis; very low in liver, gut and skin.

The protein localises to the secreted. Its subcellular location is the extracellular space. It is found in the extracellular matrix. The protein resides in the basement membrane. Its function is as follows. Binding to cells via a high affinity receptor, laminin is thought to mediate the attachment, migration and organization of cells into tissues during embryonic development by interacting with other extracellular matrix components. Alpha-5 may be the major laminin alpha chain of adult epithelial and/or endothelial basal laminae. Plays a role in the regulation of skeletogenesis, through a mechanism that involves integrin-mediated signaling and PTK2B/PYK2. This is Laminin subunit alpha-5 (Lama5) from Mus musculus (Mouse).